Consider the following 356-residue polypeptide: Probable arabinogalactan endo-beta-1,4-galactanase A (356 aa).

An N-terminal signal peptide occupies residues methionine 1 to alanine 21. The N-linked (GlcNAc...) asparagine glycan is linked to asparagine 133. Glutamate 157 functions as the Proton donor in the catalytic mechanism. Glutamate 268 functions as the Nucleophile in the catalytic mechanism.

Belongs to the glycosyl hydrolase 53 family.

It is found in the secreted. It carries out the reaction The enzyme specifically hydrolyzes (1-&gt;4)-beta-D-galactosidic linkages in type I arabinogalactans.. Endogalactanase involved in the degradation of plant cell wall polysaccharides, and more particularly of hairy regions of pectin. This is Probable arabinogalactan endo-beta-1,4-galactanase A (galA) from Neosartorya fischeri (strain ATCC 1020 / DSM 3700 / CBS 544.65 / FGSC A1164 / JCM 1740 / NRRL 181 / WB 181) (Aspergillus fischerianus).